The sequence spans 113 residues: UPF0102 protein Shal_4069 (113 aa).

It belongs to the UPF0102 family.

The polypeptide is UPF0102 protein Shal_4069 (Shewanella halifaxensis (strain HAW-EB4)).